A 473-amino-acid polypeptide reads, in one-letter code: H(+)/Cl(-) exchange transporter ClcA (473 aa).

The Cytoplasmic portion of the chain corresponds to 1 to 32 (MKTDTSTFLAQQIVRLRRRDQIRRLMQRDKTP). The helical transmembrane segment at 33 to 69 (LAILFMAAVVGTLTGLVGVAFEKAVSWVQNMRIGALV) threads the bilayer. Over 70–76 (QVADHAF) the chain is Periplasmic. A helical transmembrane segment spans residues 77 to 100 (LLWPLAFILSALLAMVGYFLVRKF). The short motif at 106–110 (GSGIP) is the Selectivity filter part_1 element. Ser-107 is a chloride binding site. The helical intramembrane region spans 109–116 (IPEIEGAL). Residues 117-123 (EELRPVR) lie on the Cytoplasmic side of the membrane. The next 2 membrane-spanning stretches (helical) occupy residues 124 to 141 (WWRV…TLGA) and 148 to 166 (EGPT…LDVF). The Selectivity filter part_2 motif lies at 146–150 (GREGP). Residues 167–176 (RMRSAEARHT) are Cytoplasmic-facing. 2 intramembrane regions (helical) span residues 177–189 (LLAT…LSAA) and 193–201 (PLAGILFII). Residues 202-214 (EEMRPQFRYNLIS) are Cytoplasmic-facing. The chain crosses the membrane as a helical span at residues 215–232 (IKAVFTGVIMSSIVFRIF). Residues 233 to 252 (NGEAPIIEVGKLSDAPVNTL) lie on the Periplasmic side of the membrane. Residues 253-281 (WLYLILGIIFGCVGPVFNSLVLRTQDMFQ) form a helical membrane-spanning segment. Topologically, residues 282 to 287 (RFHGGE) are cytoplasmic. A helical transmembrane segment spans residues 288–309 (IKKWVLMGGAIGGLCGILGLIE). Over 310-329 (PEAAGGGFNLIPIAAAGNFS) the chain is Periplasmic. 2 consecutive transmembrane segments (helical) span residues 330 to 349 (VGLL…LCFS) and 355 to 376 (GIFA…MAAA). The short motif at 355–359 (GIFAP) is the Selectivity filter part_3 element. 2 residues coordinate chloride: Ile-356 and Phe-357. Residues 377-386 (VLFPQYHLEA) lie on the Periplasmic side of the membrane. The segment at residues 387–401 (GTFAIAGMGALMAAS) is an intramembrane region (helical). Residues 402–404 (VRA) constitute an intramembrane region (note=Loop between two helices). An intramembrane region (helical) is located at residues 405–416 (PLTGIVLVLEMT). The segment at residues 417–421 (DNYQL) is an intramembrane region (note=Loop between two helices). Residues 422 to 438 (ILPMIITCLGATLLAQF) traverse the membrane as a helical segment. The Cytoplasmic segment spans residues 439 to 473 (LGGKPLYSTILARTLAKQDAEQAAKNQNASAGENT). Tyr-445 contributes to the chloride binding site.

The protein belongs to the chloride channel (TC 2.A.49) family. ClcA subfamily. Homodimer.

It is found in the cell inner membrane. The enzyme catalyses 2 chloride(in) + H(+)(out) = 2 chloride(out) + H(+)(in). In terms of biological role, proton-coupled chloride transporter. Functions as antiport system and exchanges two chloride ions for 1 proton. Probably acts as an electrical shunt for an outwardly-directed proton pump that is linked to amino acid decarboxylation, as part of the extreme acid resistance (XAR) response. This chain is H(+)/Cl(-) exchange transporter ClcA, found in Salmonella choleraesuis (strain SC-B67).